A 359-amino-acid chain; its full sequence is Phospho-N-acetylmuramoyl-pentapeptide-transferase (359 aa).

10 helical membrane passes run 3–23, 55–75, 84–104, 117–137, 156–176, 190–210, 231–251, 255–275, 283–303, and 330–350; these read QILI…PVLI, VAII…GVLM, GLLV…DDLI, TAKT…ALQF, IATV…VVSA, LAAG…FWQF, LAII…WNAA, IFMG…LSVT, VVLG…ILAF, and VIIR…ALFY.

It belongs to the glycosyltransferase 4 family. MraY subfamily. Mg(2+) is required as a cofactor.

It is found in the cell membrane. The enzyme catalyses UDP-N-acetyl-alpha-D-muramoyl-L-alanyl-gamma-D-glutamyl-meso-2,6-diaminopimeloyl-D-alanyl-D-alanine + di-trans,octa-cis-undecaprenyl phosphate = di-trans,octa-cis-undecaprenyl diphospho-N-acetyl-alpha-D-muramoyl-L-alanyl-D-glutamyl-meso-2,6-diaminopimeloyl-D-alanyl-D-alanine + UMP. The protein operates within cell wall biogenesis; peptidoglycan biosynthesis. Its function is as follows. Catalyzes the initial step of the lipid cycle reactions in the biosynthesis of the cell wall peptidoglycan: transfers peptidoglycan precursor phospho-MurNAc-pentapeptide from UDP-MurNAc-pentapeptide onto the lipid carrier undecaprenyl phosphate, yielding undecaprenyl-pyrophosphoryl-MurNAc-pentapeptide, known as lipid I. The protein is Phospho-N-acetylmuramoyl-pentapeptide-transferase of Mycolicibacterium gilvum (strain PYR-GCK) (Mycobacterium gilvum (strain PYR-GCK)).